A 287-amino-acid chain; its full sequence is Ventral anterior homeobox 1b (287 aa).

The span at 1-33 shows a compositional bias: basic and acidic residues; the sequence is MFEKTRDMDVRCNIEENGRISKPKDNKEIRESQ. The tract at residues 1–55 is disordered; sequence MFEKTRDMDVRCNIEENGRISKPKDNKEIRESQSKMPSTYPAPGSSEGCAKNKSS. Residues 89 to 148 constitute a DNA-binding region (homeobox); it reads PKRTRTSFTAEQLYRLEMEFQRCQYVVGRERTELARQLNLSETQVKVWFQNRRTKQKKDQ.

The protein belongs to the EMX homeobox family.

The protein resides in the nucleus. Involved in ventral eye development. This Xenopus laevis (African clawed frog) protein is Ventral anterior homeobox 1b (vax1-b).